A 462-amino-acid chain; its full sequence is UDP-N-acetylmuramoylalanine--D-glutamate ligase (462 aa).

117–123 lines the ATP pocket; sequence GTNGKTT.

It belongs to the MurCDEF family.

It is found in the cytoplasm. It carries out the reaction UDP-N-acetyl-alpha-D-muramoyl-L-alanine + D-glutamate + ATP = UDP-N-acetyl-alpha-D-muramoyl-L-alanyl-D-glutamate + ADP + phosphate + H(+). It functions in the pathway cell wall biogenesis; peptidoglycan biosynthesis. Its function is as follows. Cell wall formation. Catalyzes the addition of glutamate to the nucleotide precursor UDP-N-acetylmuramoyl-L-alanine (UMA). The sequence is that of UDP-N-acetylmuramoylalanine--D-glutamate ligase from Synechococcus sp. (strain CC9902).